Reading from the N-terminus, the 508-residue chain is N-acetyl-D-hexosamine oxidase (508 aa).

The FAD-binding PCMH-type domain occupies 26 to 203; that stretch reads TDAQAAGRIA…TAYTFARLPE (178 aa). Positions 64-123 form a cross-link, 6-(S-cysteinyl)-8alpha-(pros-histidyl)-FAD (His-Cys); the sequence is HCYEDFVSNNPDGAIVDLSLLNAPEVRADGTVRIPAGTQNWNGYLELYKRHNLTLPGGSC.

It belongs to the oxygen-dependent FAD-linked oxidoreductase family. Requires FAD as cofactor.

It carries out the reaction N-acetyl-D-glucosamine + O2 + H2O = N-acetyl-D-glucosaminate + H2O2 + H(+). The catalysed reaction is N-acetyl-D-galactosamine + O2 + H2O = N-acetyl-D-galactosaminate + H2O2 + H(+). It catalyses the reaction N-acetyl-D-glucosamine + O2 = N-acetyl-D-glucosamino-1,5-lactone + H2O2. The enzyme catalyses N-acetyl-D-galactosamine + O2 = N-acetyl-D-galactosamino-1,5-lactone + H2O2. Catalyzes the oxidation of a range of monosaccharides in vitro, displaying the highest activity with N-acetylglucosamine (GlcNAc) and N-acetylgalactosamine (GalNAc), with a reduction of O2 to H2O2. Acts upon the C1 carbon of the GlcNAc or GalNAc molecule, producing the corresponding lactone, which can spontaneously hydrolyze. Its biological function is unclear, but its main function might be connected to extracellular production of hydrogen peroxide to compete with other organisms through oxidative stress, or support the action of peroxidases and peroxygenases. The sequence is that of N-acetyl-D-hexosamine oxidase from Ralstonia solanacearum (strain UW551).